The chain runs to 525 residues: Cytochrome P450 CYP72A613 (525 aa).

The helical transmembrane segment at 2–22 (VFLFPTGTIIIWVLTILLAVI) threads the bilayer. Residue cysteine 473 coordinates heme.

This sequence belongs to the cytochrome P450 family. As to expression, mainly expressed in leaves and seed pods and, to a lower extent, in flowers and stems.

The protein resides in the membrane. It functions in the pathway steroid metabolism; cholesterol metabolism. In terms of biological role, involved in the biosynthesis of spiroketal steroid and saponin natural products from cholesterol such as diosgenin and analogs (e.g. furostanol and spirostanol), plant defense compounds used as main precursors for the industrial production of steroid hormones. During the 5,6-spiroketalization of cholesterol, may catalyze the 27-monohydroxylation of furostanol-type steroid to an intermediate product that undergoes a stereospecific formation of the terminal heterocycle to yield diosgenin. This Trigonella foenum-graecum (Fenugreek) protein is Cytochrome P450 CYP72A613.